Consider the following 306-residue polypeptide: UDP-N-acetylenolpyruvoylglucosamine reductase (306 aa).

The 166-residue stretch at 34–199 (RVGGPAQLLF…TSVRLRGAIA (166 aa)) folds into the FAD-binding PCMH-type domain. Residue R179 is part of the active site. Residue S228 is the Proton donor of the active site. The active site involves E298.

This sequence belongs to the MurB family. Requires FAD as cofactor.

It is found in the cytoplasm. It carries out the reaction UDP-N-acetyl-alpha-D-muramate + NADP(+) = UDP-N-acetyl-3-O-(1-carboxyvinyl)-alpha-D-glucosamine + NADPH + H(+). It participates in cell wall biogenesis; peptidoglycan biosynthesis. Its function is as follows. Cell wall formation. In Rhodopseudomonas palustris (strain BisA53), this protein is UDP-N-acetylenolpyruvoylglucosamine reductase.